The following is a 772-amino-acid chain: Endoplasmic reticulum membrane sensor NFE2L1 (772 aa).

A helical; Signal-anchor for type II membrane protein transmembrane segment spans residues 7-24 (YLTEGLLQFTILLSLIGV). Positions 108 to 148 (DPEGSVSGSQPNSGLALESSSGLQDVTGPDNGVRESETEQG) are disordered. Over residues 113–131 (VSGSQPNSGLALESSSGLQ) the composition is skewed to polar residues. A cholesterol recognition/amino acid consensus (CRAC) region region spans residues 191-199 (VFDYSHRQK). A glycan (N-linked (GlcNAc...) asparagine) is linked at Asn-348. The segment at 379-383 (SPEVE) is CPD. N-linked (GlcNAc...) asparagine glycosylation is found at Asn-412 and Asn-423. The segment at 470–532 (EEEFDSDSGL…AVGYSSDSET (63 aa)) is disordered. Residues 476–480 (DSGLS) carry the Destruction motif motif. A compositionally biased stretch (low complexity) spans 476–523 (DSGLSLDSSHSPSSLSSSEGSSSSSSSSSSSSSSASSSASSSFSEEGA). Ser-528 bears the Phosphoserine; by CK2 mark. Ser-599 is subject to Phosphoserine; by PKA. The region spanning 654 to 717 (LIRDIRRRGK…RQMKQKVQSL (64 aa)) is the bZIP domain. The basic motif stretch occupies residues 656 to 675 (RDIRRRGKNKMAAQNCRKRK). Residues 682 to 696 (LERDVEDLQRDKARL) form a leucine-zipper region. Residues 753 to 772 (RTMADQQARRQERKPKDRRK) form a disordered region. Positions 761-768 (RRQERKPK) match the Nuclear localization signal motif. Residues 763–772 (QERKPKDRRK) are compositionally biased toward basic residues.

It belongs to the bZIP family. CNC subfamily. As to quaternary structure, interacts with KEAP1. In terms of assembly, interacts (via CPD region) with FBXW7; leading to its ubiquitination and degradation. Interacts with SYVN1/HRD1; leading to its ubiquitination and degradation. Interacts (when ubiquitinated) with DDI2; leading to its cleavage. Interacts (via the bZIP domain) with small MAF protein (MAFF, MAFG or MAFK); required for binding to antioxidant response elements (AREs) on DNA. Interacts (via Destruction motif) with BTRC; leading to its ubiquitination and degradation. Interacts with CEBPB; the heterodimer represses expression of DSPP during odontoblast differentiation. Interacts with MOTS-c, a peptide produced by the mitochondrially encoded 12S rRNA MT-RNR1. Cleaved at Leu-104 by the aspartyl protease DDI2 following retrotranslocation, releasing the protein from the endoplasmic reticulum membrane and forming the transcription factor NRF1 that translocates into the nucleus. Ubiquitination is prerequisite for cleavage by aspartyl protease DDI2. Post-translationally, N-glycosylated in normal conditions, when it has a single-pass type II membrane protein topology, with the DNA-binding domain facing the endoplasmic reticulum lumen. Deglycosylated during retrotranslocation to the cytosolic side of the membrane, to have a single-pass type III membrane protein topology with the major part of the protein facing the cytosol. In terms of processing, ubiquitinated by the SCF(FBXW7) complex and SYVN1/HRD1, leading to its degradation by the proteasome. Ubiquitinated during retrotranslocation to the cytosolic side of the membrane: ubiquitination does not lead to degradation and is required for processing by the aspartyl protease DDI2 and subsequent release from the endoplasmic reticulum membrane. Phosphorylation by CK2 at Ser-528 inhibits transcription factor activity, possibly by affecting DNA-binding activity. Phosphorylation at Ser-599 is required for interaction with CEBPB. Post-translationally, ubiquitinated by the SCF(BTRC) complex in the nucleus, leading to its degradation by the proteasome.

The protein resides in the endoplasmic reticulum membrane. It localises to the nucleus. Its function is as follows. Endoplasmic reticulum membrane sensor that translocates into the nucleus in response to various stresses to act as a transcription factor. Constitutes a precursor of the transcription factor NRF1. Able to detect various cellular stresses, such as cholesterol excess, oxidative stress or proteasome inhibition. In response to stress, it is released from the endoplasmic reticulum membrane following cleavage by the protease DDI2 and translocates into the nucleus to form the transcription factor NRF1. Acts as a key sensor of cholesterol excess: in excess cholesterol conditions, the endoplasmic reticulum membrane form of the protein directly binds cholesterol via its CRAC motif, preventing cleavage and release of the transcription factor NRF1, thereby allowing expression of genes promoting cholesterol removal, such as CD36. Involved in proteasome homeostasis: in response to proteasome inhibition, it is released from the endoplasmic reticulum membrane, translocates to the nucleus and activates expression of genes encoding proteasome subunits. Functionally, CNC-type bZIP family transcription factor that translocates to the nucleus and regulates expression of target genes in response to various stresses. Heterodimerizes with small-Maf proteins (MAFF, MAFG or MAFK) and binds DNA motifs including the antioxidant response elements (AREs), which regulate expression of genes involved in oxidative stress response. Activates or represses expression of target genes, depending on the context. Plays a key role in cholesterol homeostasis by acting as a sensor of cholesterol excess: in low cholesterol conditions, translocates into the nucleus and represses expression of genes involved in defense against cholesterol excess, such as CD36. In excess cholesterol conditions, the endoplasmic reticulum membrane form of the protein directly binds cholesterol via its CRAC motif, preventing cleavage and release of the transcription factor NRF1, thereby allowing expression of genes promoting cholesterol removal. Critical for redox balance in response to oxidative stress: acts by binding the AREs motifs on promoters and mediating activation of oxidative stress response genes, such as GCLC, GCLM, GSS, MT1 and MT2. Plays an essential role during fetal liver hematopoiesis: probably has a protective function against oxidative stress and is involved in lipid homeostasis in the liver. Involved in proteasome homeostasis: in response to proteasome inhibition, mediates the 'bounce-back' of proteasome subunits by translocating into the nucleus and activating expression of genes encoding proteasome subunits. Also involved in regulating glucose flux. Together with CEBPB; represses expression of DSPP during odontoblast differentiation. In response to ascorbic acid induction, activates expression of SP7/Osterix in osteoblasts. The polypeptide is Endoplasmic reticulum membrane sensor NFE2L1 (Pongo abelii (Sumatran orangutan)).